Here is a 138-residue protein sequence, read N- to C-terminus: MNIIDHFEQENIAKLTANKQIPDFKAGDTVKVTVKVLDRSIEKDGKEKLTERFQAYEGLVIAKRNRGITSSFLVRKISHGEGVERRFMTYSPIVHSINVVKYGVVRRAKLYYLRNRSGKSARIKERHIHIAKTKTVKA.

The protein belongs to the bacterial ribosomal protein bL19 family.

Its function is as follows. This protein is located at the 30S-50S ribosomal subunit interface and may play a role in the structure and function of the aminoacyl-tRNA binding site. This is Large ribosomal subunit protein bL19 from Rickettsia akari (strain Hartford).